The chain runs to 343 residues: SH2 domain-containing adapter protein D (343 aa).

Residues 1 to 176 are disordered; it reads MAKWLRDYLN…PADEYDQPWE (176 aa). Basic and acidic residues-rich tracts occupy residues 29–40 and 73–82; these read DILRAYREQKDL and IKVEAADMAR. Acidic residues predominate over residues 92–102; it reads EEPEAETEYSD. A compositionally biased stretch (basic and acidic residues) spans 160–176; sequence RPLEDERPADEYDQPWE. Residues 225–320 form the SH2 domain; the sequence is WFHGPLSRAE…AEHLALLYPV (96 aa). The segment at 322–343 is disordered; sequence SSQSSQGPCTLAAKPERGQGDP.

Tyrosine phosphorylated by ABL. As to expression, specifically expressed in brain.

Functionally, may function as an adapter protein. The sequence is that of SH2 domain-containing adapter protein D (Shd) from Mus musculus (Mouse).